The primary structure comprises 54 residues: Large ribosomal subunit protein bL33 (54 aa).

The protein belongs to the bacterial ribosomal protein bL33 family.

The sequence is that of Large ribosomal subunit protein bL33 from Thermobifida fusca (strain YX).